Here is a 380-residue protein sequence, read N- to C-terminus: Crotonobetainyl-CoA reductase (380 aa).

It belongs to the acyl-CoA dehydrogenase family. As to quaternary structure, homotetramer. The cofactor is FAD.

The protein localises to the cytoplasm. It catalyses the reaction 4-(trimethylamino)butanoyl-CoA + oxidized [electron-transfer flavoprotein] + H(+) = crotonobetainyl-CoA + reduced [electron-transfer flavoprotein]. It functions in the pathway amine and polyamine metabolism; carnitine metabolism. Its function is as follows. Catalyzes the reduction of crotonobetainyl-CoA to gamma-butyrobetainyl-CoA. The chain is Crotonobetainyl-CoA reductase from Salmonella typhi.